The chain runs to 228 residues: Derlin-3 (228 aa).

The Cytoplasmic portion of the chain corresponds to 1 to 22; it reads MAGQRLAAGFLQVPAVTRAYTA. Residues 23–43 form a helical membrane-spanning segment; sequence ACVLTTAAVQLELLSPFQLYF. The Lumenal segment spans residues 44–57; that stretch reads NPHLVFRKFQVWRL. A helical membrane pass occupies residues 58 to 78; the sequence is ITTFLFFGPLGFGFFFNMLFV. Residues 79 to 98 are Cytoplasmic-facing; that stretch reads FRYCRMLEEGSFRGRKADFV. Residues 99–119 form a helical membrane-spanning segment; the sequence is FMFLFGGVLMTLLGFLGSLFF. At 120–168 the chain is on the lumenal side; the sequence is LGQALMAMLVYVWSRRSPHVRVNFFGLLNFQAPFLPWALMGFSLLLGNS. Residues 169-189 traverse the membrane as a helical segment; that stretch reads VVTDLLGILVGHIYYFLEDVF. Residues 190 to 228 lie on the Cytoplasmic side of the membrane; it reads PNQPGGKRLLLTPSVLKLLLDDPQEDPDYLPLPEEQPEL.

This sequence belongs to the derlin family. Forms homo- and heterooligomers with DERL2 and, to a lesser extent, with DERL1. Interacts with VCP and EDEM1. Interacts with SELENOK and SELENOS. Interacts with the signal recognition particle/SRP and the SRP receptor; in the process of endoplasmic reticulum stress-induced pre-emptive quality control. In terms of tissue distribution, highly expressed in spleen, lung, liver, spleen and testis. Expressed at intermediate level in kidney. Weakly or not expressed in brain, heart and skeletal muscle.

The protein localises to the endoplasmic reticulum membrane. Functionally, functional component of endoplasmic reticulum-associated degradation (ERAD) for misfolded lumenal glycoproteins, but not that of misfolded nonglycoproteins. May act by forming a channel that allows the retrotranslocation of misfolded glycoproteins into the cytosol where they are ubiquitinated and degraded by the proteasome. May mediate the interaction between VCP and the misfolded glycoproteins. May be involved in endoplasmic reticulum stress-induced pre-emptive quality control, a mechanism that selectively attenuates the translocation of newly synthesized proteins into the endoplasmic reticulum and reroutes them to the cytosol for proteasomal degradation. This Mus musculus (Mouse) protein is Derlin-3.